The sequence spans 617 residues: Neurosecretory protein VGF (617 aa).

The signal sequence occupies residues 1–23 (MKTFTLPASVLFCFLLLIQGLGA). Disordered regions lie at residues 29–75 (PDVF…GELF), 93–204 (RPAS…ESPG), and 239–262 (SESA…THLG). Over residues 48–64 (AVSRPKDDGVPEVRAAR) the composition is skewed to basic and acidic residues. A compositionally biased stretch (acidic residues) spans 149 to 160 (DPEEDDRSEELE). The span at 182–197 (ETAAAETETRTHTLTR) shows a compositional bias: low complexity. Gln-313 carries the pyrrolidone carboxylic acid modification. The span at 345–364 (RQRDLGGRELQETQQERENE) shows a compositional bias: basic and acidic residues. The disordered stretch occupies residues 345–599 (RQRDLGGREL…EEADAEERRL (255 aa)). Positions 378–397 (EDDVGEEDEEAAEAEAEAEE) are enriched in acidic residues. Over residues 418-436 (AEDKRSQEEAPGHRRKDAE) the composition is skewed to basic and acidic residues. Ser-423 is subject to Phosphoserine. Residues 437 to 452 (GAEEGGEEDDDDEEMD) show a composition bias toward acidic residues. The span at 491 to 501 (PPEPVPPPRAA) shows a compositional bias: pro residues. Residues 577–599 (HHPDLEAQARRAQEEADAEERRL) are compositionally biased toward basic and acidic residues.

In terms of assembly, interacts with HSPA8 on cell membrane. Interacts with C3AR1. Interacts with C1QBP.

Its subcellular location is the secreted. It localises to the cytoplasmic vesicle. The protein resides in the secretory vesicle. Functionally, secreted polyprotein that is packaged and proteolytically processed by prohormone convertases PCSK1 and PCSK2 in a cell-type-specific manner. VGF and peptides derived from its processing play many roles in neurogenesis and neuroplasticity associated with learning, memory, depression and chronic pain. Its function is as follows. Plays a role in the control of body fluid homeostasis by regulating vasopressin release. Suppresses presynaptic glutamatergic neurons connected to vasopressin neurons. In terms of biological role, plays a role in the control of body fluid homeostasis by regulating vasopressin release. Activates GABAergic interneurons which are inhibitory neurons of the nervous system and thereby suppresses presynaptic glutamatergic neurons. Also stimulates feeding behavior in an orexin-dependent manner in the hypothalamus. Functions as a positive regulator for the activation of orexin neurons resulting in elevated gastric acid secretion and gastric emptying. Secreted multifunctional peptide that interacts with different receptors and thereby plays multiple physiological roles including modulation of energy expenditure, pain, response to stress, gastric regulation as well as lipolysis. Activates the G-protein-coupled receptor C3AR1 via a folding-upon-binding mechanism leading to enhanced lipolysis in adipocytes. Interacts with gC1qR receptor in macrophages and microglia causing increased levels of intracellular calcium and hypersensitivity. Functionally, plays a role in the regulation of memory formation and depression-related behaviors potentially by influencing synaptic plasticity and neurogenesis. Induces acute and transient activation of the NTRK2/TRKB receptor and subsequent CREB phosphorylation. Also induces insulin secretion in insulinoma cells by increasing intracellular calcium mobilization. The chain is Neurosecretory protein VGF from Mus musculus (Mouse).